The primary structure comprises 379 residues: Lipoyl synthase, mitochondrial (379 aa).

[4Fe-4S] cluster-binding residues include Cys94, Cys99, Cys105, Cys126, Cys130, Cys133, and Ser342. The Radical SAM core domain occupies 109–331 (GEDNGAATAT…EKEAMSMGFL (223 aa)).

The protein belongs to the radical SAM superfamily. Lipoyl synthase family. [4Fe-4S] cluster serves as cofactor.

It localises to the mitochondrion. It catalyses the reaction [[Fe-S] cluster scaffold protein carrying a second [4Fe-4S](2+) cluster] + N(6)-octanoyl-L-lysyl-[protein] + 2 oxidized [2Fe-2S]-[ferredoxin] + 2 S-adenosyl-L-methionine + 4 H(+) = [[Fe-S] cluster scaffold protein] + N(6)-[(R)-dihydrolipoyl]-L-lysyl-[protein] + 4 Fe(3+) + 2 hydrogen sulfide + 2 5'-deoxyadenosine + 2 L-methionine + 2 reduced [2Fe-2S]-[ferredoxin]. Its pathway is protein modification; protein lipoylation via endogenous pathway; protein N(6)-(lipoyl)lysine from octanoyl-[acyl-carrier-protein]: step 2/2. Its function is as follows. Catalyzes the radical-mediated insertion of two sulfur atoms into the C-6 and C-8 positions of the octanoyl moiety bound to the lipoyl domains of lipoate-dependent enzymes, thereby converting the octanoylated domains into lipoylated derivatives. In Leishmania braziliensis, this protein is Lipoyl synthase, mitochondrial.